The sequence spans 163 residues: Lipoprotein signal peptidase (163 aa).

The next 3 membrane-spanning stretches (helical) occupy residues 11 to 31 (ILIAVFVVIFDQVTKYIIATT), 63 to 83 (KMTFFFIITIIILIALVYFFI), and 88 to 108 (YNLFMQVAISLLFAGALGNFI). Catalysis depends on residues Asp118 and Asp136. The chain crosses the membrane as a helical span at residues 131–151 (IFNIADSSLTIGVILIIIALL).

This sequence belongs to the peptidase A8 family.

The protein resides in the cell membrane. The catalysed reaction is Release of signal peptides from bacterial membrane prolipoproteins. Hydrolyzes -Xaa-Yaa-Zaa-|-(S,diacylglyceryl)Cys-, in which Xaa is hydrophobic (preferably Leu), and Yaa (Ala or Ser) and Zaa (Gly or Ala) have small, neutral side chains.. It functions in the pathway protein modification; lipoprotein biosynthesis (signal peptide cleavage). In terms of biological role, this protein specifically catalyzes the removal of signal peptides from prolipoproteins. This Staphylococcus aureus (strain MRSA252) protein is Lipoprotein signal peptidase.